The chain runs to 469 residues: MSPFLTEDFLLDTEFARRLYHDYAEEQPIFDYHCHLPPEQIAENYRFKNLYDIWLKGDHYKWRAMRTNGVAECFCTGEASDREKFQAWAETVPHTIGNPLYHWTHLELRRPFGITDTLLSATTAEDIWTRCNRMLAEDSFTARGIMGQMNVKMVGTTDDPIDDLRHHRTIAADSSFTTKVLPSWRPDKAFNIEAALFSDYIVKLGAVADVDITRFADLCQALKVRMDHFAAHGCKVSDHALDVVVYGEADDATLDGILARRLSGGTPGEIEVAQFKTAVLLFLGCEYRRRGWVQQYHIGALRNNNTPMFERLGPDIGFDSINDAPVAQPLSRLLDAQSRNGGLTKTILYCLNPRDNEVLGTMIGNFQGEGMPGKMQFGSGWWFNDQKDGMQRQMTQLAQLGLLSRFVGMLTDSRSFLSYTRHEYFRRILCQMIGRWVAQGEAPADIALLGSMVKNICFDNAKSYFAIEL.

The protein belongs to the metallo-dependent hydrolases superfamily. Uronate isomerase family.

The catalysed reaction is D-glucuronate = D-fructuronate. The enzyme catalyses aldehydo-D-galacturonate = keto-D-tagaturonate. The protein operates within carbohydrate metabolism; pentose and glucuronate interconversion. This is Uronate isomerase from Edwardsiella ictaluri (strain 93-146).